A 234-amino-acid chain; its full sequence is UPF0758 protein Rfer_3252 (234 aa).

Positions 112-234 (IFATPDAVKH…ALSMAERGLL (123 aa)) constitute an MPN domain. Zn(2+) contacts are provided by H183, H185, and D196. The short motif at 183–196 (HNHPSGTVQPSRAD) is the JAMM motif element.

Belongs to the UPF0758 family.

This Albidiferax ferrireducens (strain ATCC BAA-621 / DSM 15236 / T118) (Rhodoferax ferrireducens) protein is UPF0758 protein Rfer_3252.